A 168-amino-acid polypeptide reads, in one-letter code: Ribosome maturation factor RimM (168 aa).

The region spanning 96-168 is the PRC barrel domain; it reads KDEYYWGDLV…RIRVAWQKDW (73 aa).

The protein belongs to the RimM family. In terms of assembly, binds ribosomal protein uS19.

The protein localises to the cytoplasm. Its function is as follows. An accessory protein needed during the final step in the assembly of 30S ribosomal subunit, possibly for assembly of the head region. Essential for efficient processing of 16S rRNA. May be needed both before and after RbfA during the maturation of 16S rRNA. It has affinity for free ribosomal 30S subunits but not for 70S ribosomes. This Azoarcus sp. (strain BH72) protein is Ribosome maturation factor RimM.